A 298-amino-acid polypeptide reads, in one-letter code: UPF0696 protein C11orf68 homolog (298 aa).

Low complexity predominate over residues 1–10 (MAAAAAAVAG). The disordered stretch occupies residues 1–66 (MAAAAAAVAG…EDSPGGREDG (66 aa)). The segment covering 11–25 (AGRGGGGGGGGGGAA) has biased composition (gly residues). The span at 41 to 50 (ERSEGRRMEP) shows a compositional bias: basic and acidic residues.

It belongs to the UPF0696 family.

This is UPF0696 protein C11orf68 homolog (Bles03) from Mus musculus (Mouse).